The primary structure comprises 209 residues: A-type ATP synthase subunit D (209 aa).

This sequence belongs to the V-ATPase D subunit family. As to quaternary structure, has multiple subunits with at least A(3), B(3), C, D, E, F, H, I and proteolipid K(x).

It is found in the cell membrane. Its function is as follows. Component of the A-type ATP synthase that produces ATP from ADP in the presence of a proton gradient across the membrane. The protein is A-type ATP synthase subunit D of Sulfolobus acidocaldarius (strain ATCC 33909 / DSM 639 / JCM 8929 / NBRC 15157 / NCIMB 11770).